We begin with the raw amino-acid sequence, 398 residues long: 1-deoxy-D-xylulose 5-phosphate reductoisomerase (398 aa).

Threonine 11, glycine 12, serine 13, isoleucine 14, and asparagine 125 together coordinate NADPH. Residue lysine 126 participates in 1-deoxy-D-xylulose 5-phosphate binding. Glutamate 127 is a binding site for NADPH. Residue aspartate 151 coordinates Mn(2+). 1-deoxy-D-xylulose 5-phosphate-binding residues include serine 152, glutamate 153, serine 186, and histidine 209. Mn(2+) is bound at residue glutamate 153. Residue glycine 215 participates in NADPH binding. 4 residues coordinate 1-deoxy-D-xylulose 5-phosphate: serine 222, asparagine 227, lysine 228, and glutamate 231. Position 231 (glutamate 231) interacts with Mn(2+).

It belongs to the DXR family. Requires Mg(2+) as cofactor. The cofactor is Mn(2+).

The enzyme catalyses 2-C-methyl-D-erythritol 4-phosphate + NADP(+) = 1-deoxy-D-xylulose 5-phosphate + NADPH + H(+). The protein operates within isoprenoid biosynthesis; isopentenyl diphosphate biosynthesis via DXP pathway; isopentenyl diphosphate from 1-deoxy-D-xylulose 5-phosphate: step 1/6. Its function is as follows. Catalyzes the NADPH-dependent rearrangement and reduction of 1-deoxy-D-xylulose-5-phosphate (DXP) to 2-C-methyl-D-erythritol 4-phosphate (MEP). The sequence is that of 1-deoxy-D-xylulose 5-phosphate reductoisomerase from Acinetobacter baylyi (strain ATCC 33305 / BD413 / ADP1).